The chain runs to 205 residues: GTP cyclohydrolase 1 (205 aa).

Cysteine 94, histidine 97, and cysteine 165 together coordinate Zn(2+).

This sequence belongs to the GTP cyclohydrolase I family. As to quaternary structure, toroid-shaped homodecamer, composed of two pentamers of five dimers.

The catalysed reaction is GTP + H2O = 7,8-dihydroneopterin 3'-triphosphate + formate + H(+). It participates in cofactor biosynthesis; 7,8-dihydroneopterin triphosphate biosynthesis; 7,8-dihydroneopterin triphosphate from GTP: step 1/1. The polypeptide is GTP cyclohydrolase 1 (Sinorhizobium medicae (strain WSM419) (Ensifer medicae)).